We begin with the raw amino-acid sequence, 379 residues long: Odorant receptor 33b (379 aa).

Residues 1 to 37 lie on the Cytoplasmic side of the membrane; the sequence is MDLKPRVIRSEDIYRTYWLYWHLLGLESNFFLNRLLD. A helical transmembrane segment spans residues 38–58; that stretch reads LVITIFVTIWYPIHLILGLFM. The Extracellular portion of the chain corresponds to 59–64; sequence ERSLGD. The chain crosses the membrane as a helical span at residues 65–85; the sequence is VCKGLPITAACFFASFKFICF. Residues 86–129 lie on the Cytoplasmic side of the membrane; the sequence is RFKLSEIKEIEILFKELDQRALSREECEFFNQNTRREANFIWKS. Residues 130–150 form a helical membrane-spanning segment; sequence FIVAYGLSNISAIASVLFGGG. Over 151-165 the chain is Extracellular; sequence HKLLYPAWFPYDVQA. The chain crosses the membrane as a helical span at residues 166–186; the sequence is TELIFWLSVTYQIAGVSLAIL. The Cytoplasmic portion of the chain corresponds to 187–256; sequence QNLANDSYPP…LLRSTMNISQ (70 aa). Residues 257 to 277 form a helical membrane-spanning segment; the sequence is LGQFISSGVNISITLVNILFF. Topologically, residues 278–281 are extracellular; the sequence is ADNN. The chain crosses the membrane as a helical span at residues 282 to 302; the sequence is FAITYYGVYFLSMVLELFPCC. The Cytoplasmic portion of the chain corresponds to 303 to 355; that stretch reads YYGTLISVEMNQLTYAIYSSNWMSMNRSYSRILLIFMQLTLAEVQIKAGGMIG. A helical transmembrane segment spans residues 356-376; it reads IGMNAFFATVRLAYSFFTLAM. Over 377-379 the chain is Extracellular; that stretch reads SLR.

The protein belongs to the insect chemoreceptor superfamily. Heteromeric odorant receptor channel (TC 1.A.69) family. Or2a subfamily. As to quaternary structure, interacts with Orco. Complexes exist early in the endomembrane system in olfactory sensory neurons (OSNs), coupling these complexes to the conserved ciliary trafficking pathway. In terms of tissue distribution, expressed in 15 cells in the antenna but not the maxillary palp.

It localises to the cell membrane. Functionally, odorant receptor which mediates acceptance or avoidance behavior, depending on its substrates. The odorant receptor repertoire encodes a large collection of odor stimuli that vary widely in identity, intensity, and duration. May form a complex with Orco to form odorant-sensing units, providing sensitive and prolonged odorant signaling and calcium permeability. Involved in the behavioral responses to pentyl acetate and pyrazines. This is Odorant receptor 33b (Or33b) from Drosophila melanogaster (Fruit fly).